A 274-amino-acid polypeptide reads, in one-letter code: Acyl-[acyl-carrier-protein]--UDP-N-acetylglucosamine O-acyltransferase (274 aa).

This sequence belongs to the transferase hexapeptide repeat family. LpxA subfamily. As to quaternary structure, homotrimer.

The protein localises to the cytoplasm. The catalysed reaction is a (3R)-hydroxyacyl-[ACP] + UDP-N-acetyl-alpha-D-glucosamine = a UDP-3-O-[(3R)-3-hydroxyacyl]-N-acetyl-alpha-D-glucosamine + holo-[ACP]. Its pathway is glycolipid biosynthesis; lipid IV(A) biosynthesis; lipid IV(A) from (3R)-3-hydroxytetradecanoyl-[acyl-carrier-protein] and UDP-N-acetyl-alpha-D-glucosamine: step 1/6. In terms of biological role, involved in the biosynthesis of lipid A, a phosphorylated glycolipid that anchors the lipopolysaccharide to the outer membrane of the cell. The protein is Acyl-[acyl-carrier-protein]--UDP-N-acetylglucosamine O-acyltransferase of Bartonella henselae (strain ATCC 49882 / DSM 28221 / CCUG 30454 / Houston 1) (Rochalimaea henselae).